The primary structure comprises 279 residues: Urease accessory protein UreD (279 aa).

Belongs to the UreD family. UreD, UreF and UreG form a complex that acts as a GTP-hydrolysis-dependent molecular chaperone, activating the urease apoprotein by helping to assemble the nickel containing metallocenter of UreC. The UreE protein probably delivers the nickel.

The protein resides in the cytoplasm. Required for maturation of urease via the functional incorporation of the urease nickel metallocenter. The chain is Urease accessory protein UreD from Nitrosospira multiformis (strain ATCC 25196 / NCIMB 11849 / C 71).